The primary structure comprises 183 residues: MPVAAIIREEIEIPESVTIEVINNEEVVVKAGGKELRRILSYPDVVIKKEDNKVVVESLYPRKKQAAIIGTFASHIKNIITGVSEGFEYKMKIRYAHFPMKISVKGNEVIIDNFLGEKHPRKATIMEGVKVKVSGEDVIVTGIDKEKTGQTAANIEQATRVRGRDTRVFQDGIYIVEKAGKVL.

This sequence belongs to the universal ribosomal protein uL6 family. As to quaternary structure, part of the 50S ribosomal subunit.

Its function is as follows. This protein binds to the 23S rRNA, and is important in its secondary structure. It is located near the subunit interface in the base of the L7/L12 stalk, and near the tRNA binding site of the peptidyltransferase center. This chain is Large ribosomal subunit protein uL6, found in Methanococcus aeolicus (strain ATCC BAA-1280 / DSM 17508 / OCM 812 / Nankai-3).